We begin with the raw amino-acid sequence, 540 residues long: Phosphoenolpyruvate carboxykinase (ATP) (540 aa).

The substrate site is built by arginine 67, tyrosine 207, and lysine 213. ATP contacts are provided by residues lysine 213, histidine 232, and 248 to 256 (GLSGTGKTT). Residues lysine 213 and histidine 232 each contribute to the Mn(2+) site. Aspartate 269 is a Mn(2+) binding site. ATP-binding positions include glutamate 297, arginine 333, 449–450 (RI), and threonine 455. Residue arginine 333 coordinates substrate.

The protein belongs to the phosphoenolpyruvate carboxykinase (ATP) family. As to quaternary structure, monomer. Requires Mn(2+) as cofactor.

It localises to the cytoplasm. The catalysed reaction is oxaloacetate + ATP = phosphoenolpyruvate + ADP + CO2. It functions in the pathway carbohydrate biosynthesis; gluconeogenesis. Involved in the gluconeogenesis. Catalyzes the conversion of oxaloacetate (OAA) to phosphoenolpyruvate (PEP) through direct phosphoryl transfer between the nucleoside triphosphate and OAA. In Aliivibrio fischeri (strain MJ11) (Vibrio fischeri), this protein is Phosphoenolpyruvate carboxykinase (ATP).